A 237-amino-acid polypeptide reads, in one-letter code: Bax inhibitor 1 (237 aa).

The Cytoplasmic segment spans residues 1–29; that stretch reads MNIFDRKINFDALLKFSHITPSTQQHLKK. Lys-7 is covalently cross-linked (Glycyl lysine isopeptide (Lys-Gly) (interchain with G-Cter in ubiquitin)). The helical transmembrane segment at 30 to 50 threads the bilayer; the sequence is VYASFALCMFVAAAGAYVHVV. Residues 51–52 lie on the Lumenal side of the membrane; that stretch reads TH. A helical membrane pass occupies residues 53-73; that stretch reads FIQAGLLSALGSLALMIWLMA. Topologically, residues 74-86 are cytoplasmic; that stretch reads TPHSHETEQKRLG. The chain crosses the membrane as a helical span at residues 87–107; sequence LLAGFAFLTGVGLGPALELCI. The Lumenal portion of the chain corresponds to 108–112; that stretch reads AVNPS. A helical membrane pass occupies residues 113–133; the sequence is ILPTAFMGTAMIFTCFSLSAL. The Cytoplasmic portion of the chain corresponds to 134–139; it reads YARRRS. A helical transmembrane segment spans residues 140–160; that stretch reads YLFLGGILMSAMSLMLLSSLG. The Lumenal portion of the chain corresponds to 161–166; sequence NLFFGS. A helical membrane pass occupies residues 167–187; sequence IWLFQANLYLGLLVMCGFVLF. Residues 188 to 206 lie on the Cytoplasmic side of the membrane; that stretch reads DTQLIIEKAEHGDKDYIWH. Residues 207 to 227 constitute an intramembrane region (helical); that stretch reads CVDLFLDFVTLFRKLMLILAF. At 228-237 the chain is on the cytoplasmic side; the sequence is NEKDKKKEKK.

This sequence belongs to the BI1 family. Interacts with BCL2. Interacts with BCL2L1. Interacts with ERN1. Post-translationally, ubiquitinated by BFAR, leading to proteasomal degradation. Highly abundant in adult testis.

It localises to the endoplasmic reticulum membrane. In terms of biological role, endoplasmic reticulum (ER)-resident protein that confers cellular protection as an anti-apoptotic protein by limiting multiple stress-inducing pathways surrounding the endoplasmic reticulum and mitochondria. Inhibits the activities of the key sensor for the endoplasmic reticulum unfolded protein response IRE1alpha/ERN1 both directly and by blocking BAX/BAK binding. Modulates ER calcium homeostasis by acting as a calcium-leak channel. Negatively regulates autophagy and autophagosome formation, especially during periods of nutrient deprivation, and reduces cell survival during starvation. In Mus musculus (Mouse), this protein is Bax inhibitor 1 (Tmbim6).